We begin with the raw amino-acid sequence, 505 residues long: L-amino-acid oxidase (505 aa).

Positions 1-18 (MNVFLMFSLLFLAALGSC) are cleaved as a signal peptide. A disulfide bridge links cysteine 28 with cysteine 191. FAD-binding positions include 61-62 (MS), 81-82 (EA), arginine 89, and 105-108 (GPMR). Arginine 108 is a substrate binding site. An N-linked (GlcNAc...) asparagine glycan is attached at asparagine 190. Residue histidine 241 coordinates substrate. Valine 279 serves as a coordination point for FAD. The cysteines at positions 349 and 430 are disulfide-linked. The N-linked (GlcNAc...) asparagine glycan is linked to asparagine 379. Tyrosine 390 is a substrate binding site. Residues glutamate 475 and 482-487 (GWIDST) contribute to the FAD site. A substrate-binding site is contributed by 482-483 (GW).

This sequence belongs to the flavin monoamine oxidase family. FIG1 subfamily. In terms of assembly, monomer. This is in contrast with most of its orthologs, that are non-covalently linked homodimers. Requires FAD as cofactor. In terms of processing, N-glycosylated. Expressed by the venom gland.

The protein localises to the secreted. The enzyme catalyses an L-alpha-amino acid + O2 + H2O = a 2-oxocarboxylate + H2O2 + NH4(+). It carries out the reaction L-leucine + O2 + H2O = 4-methyl-2-oxopentanoate + H2O2 + NH4(+). Catalyzes an oxidative deamination of predominantly hydrophobic and aromatic L-amino acids, thus producing hydrogen peroxide that may contribute to the diverse toxic effects of this enzyme. Shows activity on L-Leu. Exhibits diverse biological activities, such as hemorrhage, edema, antibacterial and antiparasitic activities, as well as regulation of platelet aggregation. Effects of snake L-amino oxidases on platelets are controversial, since they either induce aggregation or inhibit agonist-induced aggregation. These different effects are probably due to different experimental conditions. This protein has an ability to induce hemolysis and apoptosis. This chain is L-amino-acid oxidase, found in Protobothrops flavoviridis (Habu).